A 448-amino-acid chain; its full sequence is Methylenetetrahydrofolate--tRNA-(uracil-5-)-methyltransferase TrmFO (448 aa).

13-18 (GAGLAG) contributes to the FAD binding site.

This sequence belongs to the MnmG family. TrmFO subfamily. The cofactor is FAD.

Its subcellular location is the cytoplasm. The catalysed reaction is uridine(54) in tRNA + (6R)-5,10-methylene-5,6,7,8-tetrahydrofolate + NADH + H(+) = 5-methyluridine(54) in tRNA + (6S)-5,6,7,8-tetrahydrofolate + NAD(+). The enzyme catalyses uridine(54) in tRNA + (6R)-5,10-methylene-5,6,7,8-tetrahydrofolate + NADPH + H(+) = 5-methyluridine(54) in tRNA + (6S)-5,6,7,8-tetrahydrofolate + NADP(+). Catalyzes the folate-dependent formation of 5-methyl-uridine at position 54 (M-5-U54) in all tRNAs. The chain is Methylenetetrahydrofolate--tRNA-(uracil-5-)-methyltransferase TrmFO from Streptococcus pyogenes serotype M28 (strain MGAS6180).